The following is a 148-amino-acid chain: Lipoprotein MlpH (148 aa).

The first 17 residues, 1 to 17 (MKIINILFCLFLLMLNG), serve as a signal peptide directing secretion. Cysteine 18 carries the N-palmitoyl cysteine lipid modification. Cysteine 18 is lipidated: S-diacylglycerol cysteine. The segment at 26-61 (LKNNAQQTKSRRKRDLTQKEVTQEKPKSKEELLREK) is disordered. Over residues 40–61 (DLTQKEVTQEKPKSKEELLREK) the composition is skewed to basic and acidic residues.

Belongs to the Multicopy lipoprotein (Mlp) family.

The protein resides in the cell outer membrane. Its function is as follows. An outer membrane protein that may participate in pathogenesis. Some human Lyme disease patients have antibodies against this protein. The Mlp proteins probably undergo intragenic recombination, generating new alleles. In Borreliella burgdorferi (strain ATCC 35210 / DSM 4680 / CIP 102532 / B31) (Borrelia burgdorferi), this protein is Lipoprotein MlpH.